We begin with the raw amino-acid sequence, 353 residues long: DNA polymerase IV (353 aa).

Positions 6–187 constitute a UmuC domain; the sequence is IIHIDCDCFY…LPVTKLHGVG (182 aa). 2 residues coordinate Mg(2+): Asp-10 and Asp-105. Glu-106 is an active-site residue.

This sequence belongs to the DNA polymerase type-Y family. Monomer. Mg(2+) serves as cofactor.

Its subcellular location is the cytoplasm. It carries out the reaction DNA(n) + a 2'-deoxyribonucleoside 5'-triphosphate = DNA(n+1) + diphosphate. Functionally, poorly processive, error-prone DNA polymerase involved in untargeted mutagenesis. Copies undamaged DNA at stalled replication forks, which arise in vivo from mismatched or misaligned primer ends. These misaligned primers can be extended by PolIV. Exhibits no 3'-5' exonuclease (proofreading) activity. May be involved in translesional synthesis, in conjunction with the beta clamp from PolIII. This is DNA polymerase IV from Pseudomonas savastanoi pv. phaseolicola (strain 1448A / Race 6) (Pseudomonas syringae pv. phaseolicola (strain 1448A / Race 6)).